Consider the following 254-residue polypeptide: Thiazole synthase (254 aa).

Catalysis depends on Lys95, which acts as the Schiff-base intermediate with DXP. Residues Gly156, 182–183 (AG), and 204–205 (NT) contribute to the 1-deoxy-D-xylulose 5-phosphate site.

It belongs to the ThiG family. In terms of assembly, homotetramer. Forms heterodimers with either ThiH or ThiS.

It localises to the cytoplasm. The catalysed reaction is [ThiS sulfur-carrier protein]-C-terminal-Gly-aminoethanethioate + 2-iminoacetate + 1-deoxy-D-xylulose 5-phosphate = [ThiS sulfur-carrier protein]-C-terminal Gly-Gly + 2-[(2R,5Z)-2-carboxy-4-methylthiazol-5(2H)-ylidene]ethyl phosphate + 2 H2O + H(+). Its pathway is cofactor biosynthesis; thiamine diphosphate biosynthesis. Functionally, catalyzes the rearrangement of 1-deoxy-D-xylulose 5-phosphate (DXP) to produce the thiazole phosphate moiety of thiamine. Sulfur is provided by the thiocarboxylate moiety of the carrier protein ThiS. In vitro, sulfur can be provided by H(2)S. This Vibrio atlanticus (strain LGP32) (Vibrio splendidus (strain Mel32)) protein is Thiazole synthase.